A 191-amino-acid chain; its full sequence is Cytochrome c oxidase assembly protein CtaG (191 aa).

The Cytoplasmic portion of the chain corresponds to 1-9; that stretch reads MSLSPHQKT. Residues 10-30 traverse the membrane as a helical; Signal-anchor for type II membrane protein segment; the sequence is AGGLVLVVAVMGAASFAAVPF. The Periplasmic segment spans residues 31-191; that stretch reads YNWFCRVTGF…LAAESATDVN (161 aa).

It belongs to the COX11/CtaG family.

The protein resides in the cell inner membrane. Its function is as follows. Exerts its effect at some terminal stage of cytochrome c oxidase synthesis, probably by being involved in the insertion of the copper B into subunit I. This chain is Cytochrome c oxidase assembly protein CtaG, found in Cereibacter sphaeroides (strain ATCC 17023 / DSM 158 / JCM 6121 / CCUG 31486 / LMG 2827 / NBRC 12203 / NCIMB 8253 / ATH 2.4.1.) (Rhodobacter sphaeroides).